Consider the following 551-residue polypeptide: MALTLAAHKTLPRRKLVLVVLDGVGIGPRDEYDAVHVAKTPLMDALFNDPKHFRSICAHGTAVGLPTDADMGNSEVGHNALGAGRVVLQGASLVDDALESGEIFTSEGYRYLHGAFSQPGRTLHLIGLLSDGGVHSRDNQVYQILKHAGANGAKRIRVHALYDGRDVPDKTSFKFTDELEEVLAKLREGGCDARIASGGGRMFVTMDRYEADWSIVERGWRAQVLGEGRAFKSAREALTKFREEDANISDQYYPPFVIAGDDGRPIGTIEDGDAVLCFNFRGDRVIEMSRAFEEEEFDKFNRVRLPKVRYAGMMRYDGDLGIPNNFLVPPPKLTRTSEEYLIGSGCNIFALSETQKFGHVTYFWNGNRSGKLSEERETFCEIPSDRVQFNQKPLMKSKEITDAAVDAIKSGKYDMIRINYPNGDMVGHTGDLKATITSLEAVDQSLQRLKEAVDSVNGVFLITADHGNSDDMVQRDKKGKPVRDAEGNLMPLTSHTLAPVPVFIGGAGLDPRVQMRTDLPRAGLANVTATFINLMGFEAPSDYEPSLIEVA.

Asp-22 and Ser-74 together coordinate Mn(2+). Catalysis depends on Ser-74, which acts as the Phosphoserine intermediate. Substrate contacts are provided by residues His-135, 165–166, Arg-201, Arg-208, and 281–284; these read RD and RGDR. Residue Asp-319 coordinates Mn(2+). Lys-356 is a substrate binding site. Mn(2+) contacts are provided by Asp-424, His-428, Asp-465, His-466, and His-495.

It belongs to the BPG-independent phosphoglycerate mutase family. In terms of assembly, monomer. Mn(2+) is required as a cofactor.

It is found in the cytoplasm. It carries out the reaction (2R)-2-phosphoglycerate = (2R)-3-phosphoglycerate. It functions in the pathway carbohydrate degradation; glycolysis; pyruvate from D-glyceraldehyde 3-phosphate: step 3/5. In terms of biological role, catalyzes the interconversion of 2-phosphoglycerate (2-PGA) and 3-phosphoglycerate (3-PGA). The sequence is that of 2,3-bisphosphoglycerate-independent phosphoglycerate mutase from Trypanosoma brucei brucei (strain 927/4 GUTat10.1).